A 148-amino-acid chain; its full sequence is UPF0208 membrane protein HD_1715 (148 aa).

Helical transmembrane passes span 41–60 and 66–88; these read AARF…YFFT and ILAN…LYWL.

This sequence belongs to the UPF0208 family.

The protein resides in the cell inner membrane. The protein is UPF0208 membrane protein HD_1715 of Haemophilus ducreyi (strain 35000HP / ATCC 700724).